A 745-amino-acid chain; its full sequence is A-kinase anchor protein 5 (745 aa).

The interval 1–121 is disordered; it reads METSVSEIQV…KKKAKSRLKF (121 aa). Positions 1–164 are essential to the intracellular anchoring function; the sequence is METSVSEIQV…EIKAQTQPDD (164 aa). Phosphoserine is present on residues Ser4 and Ser22. Cys36 is lipidated: S-palmitoyl cysteine. Residues 37–50 are compositionally biased toward basic residues; sequence FKRRKKANKTKPKA. Basic and acidic residues-rich tracts occupy residues 54 to 63 and 90 to 100; these read TAEETKKHTP and SEPAKKQKPPE. The AKAP CaM-binding motif lies at 74 to 94; it reads AGAWASIKGLVTHRKRSEPAK. The S-palmitoyl cysteine moiety is linked to residue Cys123. Polar residues predominate over residues 162-175; sequence PDDQAIQAGSTQGL. 2 disordered regions span residues 162–195 and 215–392; these read PDDQ…ISNS and AIQM…DHTE. Basic and acidic residues-rich tracts occupy residues 180 to 189 and 222 to 231; these read LVRDGKKSQE and ELEKETKVIT. Polar residues predominate over residues 234-268; sequence PSVQTQRASLLESSAAGSPRSVTSAAPPSPATTHQ. The span at 285-300 shows a compositional bias: basic and acidic residues; it reads GKDDRRKTAAEEKKSG. One copy of the 1; approximate repeat lies at 304–312; the sequence is LGQAEEAAV. The 28 X 8 AA repeats of V-G-Q-A-E-E-A-T stretch occupies residues 304 to 628; it reads LGQAEEAAVG…PTVDQAEEAI (325 aa). The 2; approximate repeat unit spans residues 320-327; it reads LSQAGEAT. The stretch at 328–335 is one 3; approximate repeat; that stretch reads AGHPEEAT. One copy of the 4; approximate repeat lies at 348–355; that stretch reads LSQAEETT. The stretch at 356–363 is one 5; approximate repeat; it reads VAQAKETV. The 6; approximate repeat unit spans residues 364-395; that stretch reads LSQAKEGELSQAKKATVGQAEEATIDHTEKVT. The stretch at 420-436 is one 7; approximate repeat; that stretch reads LSQAKEATVVGQAEEAT. The 8; approximate repeat unit spans residues 445 to 452; it reads VGQAEEAT. 5 repeat units span residues 461 to 468, 469 to 476, 477 to 484, 485 to 492, and 493 to 500. Positions 466–560 are disordered; that stretch reads EATVGQAEEA…QAEEATVGQA (95 aa). The 14; approximate repeat unit spans residues 501-508; it reads VGQAEEAT. The stretch at 517 to 524 is one 15; approximate repeat; sequence VDQAEEAT. Repeat copies occupy residues 525–532, 533–540, 541–548, and 549–556. The span at 535 to 546 shows a compositional bias: basic and acidic residues; it reads HTEKVTVDHAEE. The stretch at 557-564 is one 20; approximate repeat; the sequence is VGQAEKVT. Repeat unit 21 spans residues 565–572; it reads VDHAEEAT. One copy of the 22; approximate repeat lies at 573-580; sequence VGQAEEAT. Residues 581-588 form a 23; approximate repeat; it reads VGQAEKVT. Residues 589-596 form a 24; approximate repeat; it reads VDHAEEAT. Copy 25 of the repeat occupies 597–604; the sequence is VGQAEEAT. One copy of the 26; approximate repeat lies at 605–612; the sequence is VGQAEKVT. The stretch at 613 to 620 is one 27; approximate repeat; that stretch reads VDQAEEPT. A disordered region spans residues 617-651; the sequence is EEPTVDQAEEAISSHAPDLKENGIDTEKPRSEESK. The 28; approximate repeat unit spans residues 621-628; it reads VDQAEEAI. The span at 633–651 shows a compositional bias: basic and acidic residues; it reads PDLKENGIDTEKPRSEESK. The segment at 706-727 is RII-beta subunit binding domain; it reads YETLLIETASSLVKNAIELSVE. A tethers NFATC2 to CRAC channels region spans residues 728–745; the sequence is QLVNEMVSEDNQINTLFQ.

In terms of assembly, binding protein for dimer of the RII-beta regulatory subunit of cAMP-dependent protein kinase (PKA) and also for the protein kinase C (PKC) and the phosphatase calcineurin (PP2B). Each enzyme is inhibited when bound to the anchoring protein. Also binds the beta2-adrenergic receptor. Part of a complex containing AKAP5, ADCY5, ADCY6 and PDE4C. Interacts with ADCY8, and enhances its phosphorylation at lipid rafts. Interacts with ORAI1 (isoform alpha) (via N-terminus) upon store depletion and in response to LTC4. Does not interact with ORAI2 and ORAI3 paralogs. Interacts (via leucine zipper domain) with NFATC2/NFAT1. Interacts with calmodulin; the interaction is calcium-independent. Interacts with KCNQ2; the interaction may help KCNQ2 channel complex to retain calcium-bound calmodulin. Interacts with KCNK2; the channel is recruited to postsynaptic microdomains by AKAP5 where it can integrate neurotransmitter receptor signals. Part of a complex composed of AKAP5 and ADRB2. Palmitoylated. Palmitoylation at Cys-36 and Cys-123 play a key role in the targeting of AKAP5 to lipid rafts. Palmitoylation by ZDHHC2 is required for AKAP5 function in LTP-stimulated recycling endosome exocytosis.

The protein localises to the postsynaptic recycling endosome membrane. Its subcellular location is the cell projection. It localises to the dendrite. The protein resides in the postsynaptic cell membrane. In terms of biological role, multivalent scaffold protein that anchors the cAMP-dependent protein kinase/PKA to cytoskeletal and/or organelle-associated proteins, targeting the signal carried by cAMP to specific intracellular effectors. Association with the beta2-adrenergic receptor (beta2-AR) not only regulates beta2-AR signaling pathway, but also the activation by PKA by switching off the beta2-AR signaling cascade. Plays a role in long term synaptic potentiation by regulating protein trafficking from the dendritic recycling endosomes to the plasma membrane and controlling both structural and functional plasticity at excitatory synapses. In hippocampal pyramidal neurons, recruits KCNK2/TREK-1 channel at postsynaptic dense bodies microdomains and converts it to a leak channel no longer sensitive to stimulation by arachidonic acid, acidic pH or mechanical stress, nor inhibited by Gq-coupled receptors but still under the negative control of Gs-coupled receptors. Associates with ORAI1 pore-forming subunit of CRAC channels in Ca(2+) signaling microdomains where it recruits NFATC2/NFAT1 and couples store-operated Ca(2+) influx to calmodulin and calcineurin signaling and activation of NFAT-dependent transcriptional responses. This chain is A-kinase anchor protein 5 (Akap5), found in Mus musculus (Mouse).